The following is a 148-amino-acid chain: D-aminoacyl-tRNA deacylase (148 aa).

The Gly-cisPro motif, important for rejection of L-amino acids motif lies at 137-138; that stretch reads GP.

Belongs to the DTD family. In terms of assembly, homodimer.

It localises to the cytoplasm. The catalysed reaction is glycyl-tRNA(Ala) + H2O = tRNA(Ala) + glycine + H(+). It catalyses the reaction a D-aminoacyl-tRNA + H2O = a tRNA + a D-alpha-amino acid + H(+). Functionally, an aminoacyl-tRNA editing enzyme that deacylates mischarged D-aminoacyl-tRNAs. Also deacylates mischarged glycyl-tRNA(Ala), protecting cells against glycine mischarging by AlaRS. Acts via tRNA-based rather than protein-based catalysis; rejects L-amino acids rather than detecting D-amino acids in the active site. By recycling D-aminoacyl-tRNA to D-amino acids and free tRNA molecules, this enzyme counteracts the toxicity associated with the formation of D-aminoacyl-tRNA entities in vivo and helps enforce protein L-homochirality. This chain is D-aminoacyl-tRNA deacylase, found in Oenococcus oeni (strain ATCC BAA-331 / PSU-1).